A 1009-amino-acid polypeptide reads, in one-letter code: Type VII secretion system accessory factor EsaA (1009 aa).

6 helical membrane passes run 7–27 (IYALIVTLIIIIAIVSMIFFV), 822–842 (ISPTLFVLLMYLLSMITAYIF), 869–889 (VITSGVIGTTGLVEGLIVGLI), 903–923 (KFILMVILTMMVFVLINTYLL), 928–948 (SIGMFLMIAALGLYFVAMNNL), and 979–999 (IGLALVILTVLVIIGFVLNMF).

It belongs to the EsaA family. As to quaternary structure, homodimer. Interacts with EssB.

It localises to the cell membrane. In terms of biological role, component of the type VII secretion system (Ess). Provides together with EssB and other components such as EssC and EssE a secretion platform across the cytoplasmic membrane in the host. This is Type VII secretion system accessory factor EsaA from Staphylococcus aureus (strain Mu50 / ATCC 700699).